The following is a 467-amino-acid chain: Dimethylamine methyltransferase MtbB2 (467 aa).

Pyl356 is a non-standard amino acid (pyrrolysine).

This sequence belongs to the dimethylamine methyltransferase family.

It catalyses the reaction Co(I)-[dimethylamine-specific corrinoid protein] + dimethylamine + H(+) = methyl-Co(III)-[dimethylamine-specific corrinoid protein] + methylamine. Its pathway is one-carbon metabolism; methanogenesis from dimethylamine. Functionally, catalyzes the transfer of a methyl group from dimethylamine to the corrinoid cofactor of MtbC. This chain is Dimethylamine methyltransferase MtbB2 (mtbB2), found in Methanosarcina barkeri (strain Fusaro / DSM 804).